Here is a 407-residue protein sequence, read N- to C-terminus: Imidazolonepropionase (407 aa).

Histidine 75 and histidine 77 together coordinate Fe(3+). Histidine 75 and histidine 77 together coordinate Zn(2+). The 4-imidazolone-5-propanoate site is built by arginine 84, tyrosine 147, and histidine 180. Tyrosine 147 lines the N-formimidoyl-L-glutamate pocket. Histidine 245 lines the Fe(3+) pocket. Histidine 245 lines the Zn(2+) pocket. Glutamine 248 is a 4-imidazolone-5-propanoate binding site. Aspartate 320 lines the Fe(3+) pocket. Aspartate 320 lines the Zn(2+) pocket. N-formimidoyl-L-glutamate is bound by residues asparagine 322 and glycine 324. Serine 325 contacts 4-imidazolone-5-propanoate.

The protein belongs to the metallo-dependent hydrolases superfamily. HutI family. Zn(2+) is required as a cofactor. It depends on Fe(3+) as a cofactor.

It is found in the cytoplasm. It carries out the reaction 4-imidazolone-5-propanoate + H2O = N-formimidoyl-L-glutamate. The protein operates within amino-acid degradation; L-histidine degradation into L-glutamate; N-formimidoyl-L-glutamate from L-histidine: step 3/3. Its function is as follows. Catalyzes the hydrolytic cleavage of the carbon-nitrogen bond in imidazolone-5-propanoate to yield N-formimidoyl-L-glutamate. It is the third step in the universal histidine degradation pathway. This Pseudoalteromonas atlantica (strain T6c / ATCC BAA-1087) protein is Imidazolonepropionase.